Consider the following 453-residue polypeptide: Ribosome biogenesis protein YTM1 (453 aa).

The ubiquitin-like (UBL) domain stretch occupies residues 19-102; it reads VKVRFFTNEE…ETVIDLQYTR (84 aa). The sufficient for interaction with ERB1 and association with 66S pre-ribosomes stretch occupies residues 112–453; it reads SFTNEDWISS…KKIDIYREAN (342 aa). WD repeat units lie at residues 128-166, 168-206, 218-257, 292-332, 334-373, 380-420, and 422-453; these read GHGAVLASNMKLQESKILSGSYDGVVRTYNMSGEVESQY, GHSGPVKSVRWISPTRIVSAGNDHSLRLWKTKLAGVEEG, GHKGPVVDLAVDYKSNKIISAGNDSVVGVWSTNASDMSAV, GHGQ…CVDT, STGFSLLSILQLPNLHLVASGSSARHINLHDPRASSSTEQ, GHTN…AMYT, and GKGGKVFGVSWDPIGIVSGGEDKKIDIYREAN.

The protein belongs to the WD repeat WDR12/YTM1 family. As to quaternary structure, component of the NOP7 complex, composed of ERB1, NOP7 and YTM1. The complex is held together by ERB1, which interacts with NOP7 via its N-terminal domain and with YTM1 via a high-affinity interaction between the seven-bladed beta-propeller domains of the 2 proteins. The NOP7 complex associates with the 66S pre-ribosome. Interacts (via UBL domain) with MDN1 (via VWFA/MIDAS domain).

It is found in the nucleus. Its subcellular location is the nucleolus. It localises to the nucleoplasm. Functionally, component of the NOP7 complex, which is required for maturation of the 25S and 5.8S ribosomal RNAs and formation of the 60S ribosome. In Meyerozyma guilliermondii (strain ATCC 6260 / CBS 566 / DSM 6381 / JCM 1539 / NBRC 10279 / NRRL Y-324) (Yeast), this protein is Ribosome biogenesis protein YTM1.